Reading from the N-terminus, the 518-residue chain is 2-isopropylmalate synthase (518 aa).

In terms of domain architecture, Pyruvate carboxyltransferase spans 5 to 268 (IIIFDTTLRD…DTRINTQEIH (264 aa)). Mn(2+) is bound by residues D14, H202, H204, and N238. The tract at residues 393–518 (TLDVITSQCI…DLKLHKIAGV (126 aa)) is regulatory domain.

Belongs to the alpha-IPM synthase/homocitrate synthase family. LeuA type 1 subfamily. Homodimer. Requires Mn(2+) as cofactor.

It localises to the cytoplasm. The catalysed reaction is 3-methyl-2-oxobutanoate + acetyl-CoA + H2O = (2S)-2-isopropylmalate + CoA + H(+). Its pathway is amino-acid biosynthesis; L-leucine biosynthesis; L-leucine from 3-methyl-2-oxobutanoate: step 1/4. In terms of biological role, catalyzes the condensation of the acetyl group of acetyl-CoA with 3-methyl-2-oxobutanoate (2-ketoisovalerate) to form 3-carboxy-3-hydroxy-4-methylpentanoate (2-isopropylmalate). The protein is 2-isopropylmalate synthase of Pasteurella multocida (strain Pm70).